Consider the following 644-residue polypeptide: 3D-(3,5/4)-trihydroxycyclohexane-1,2-dione hydrolase (644 aa).

A thiamine diphosphate-binding site is contributed by E65. The segment at 442-522 is thiamine pyrophosphate binding; that stretch reads SLPGDLQRMW…INVLLFDNSG (81 aa). Residues D493 and N520 each coordinate Mg(2+).

It belongs to the TPP enzyme family. Mg(2+) serves as cofactor. It depends on thiamine diphosphate as a cofactor.

It catalyses the reaction 3D-3,5/4-trihydroxycyclohexane-1,2-dione + H2O = 5-deoxy-D-glucuronate + H(+). Its pathway is polyol metabolism; myo-inositol degradation into acetyl-CoA; acetyl-CoA from myo-inositol: step 3/7. In terms of biological role, involved in the cleavage of the C1-C2 bond of 3D-(3,5/4)-trihydroxycyclohexane-1,2-dione (THcHDO) to yield 5-deoxy-glucuronate (5DG). The polypeptide is 3D-(3,5/4)-trihydroxycyclohexane-1,2-dione hydrolase (Bacillus cereus (strain AH820)).